Here is a 566-residue protein sequence, read N- to C-terminus: Tetratricopeptide repeat protein 34 (566 aa).

The interval 1 to 29 is disordered; sequence MLQRSPRAGPSRAQGRREAAETGGPTTQE. TPR repeat units follow at residues 50 to 83, 178 to 211, 212 to 245, 306 to 339, 341 to 373, 424 to 457, 464 to 497, and 512 to 545; these read EASR…RPQA, SESL…EPGN, VQAL…GPGT, PHWH…APTS, AARA…DAPD, ACHL…ALGD, AEDF…APSL, and ARMF…DPDH.

The sequence is that of Tetratricopeptide repeat protein 34 (TTC34) from Homo sapiens (Human).